We begin with the raw amino-acid sequence, 711 residues long: RB-associated KRAB zinc finger protein (711 aa).

Positions 8–79 constitute a KRAB domain; that stretch reads LSFKDVAVAF…EGDRHAQRHL (72 aa). Residues lysine 97 and lysine 256 each participate in a glycyl lysine isopeptide (Lys-Gly) (interchain with G-Cter in SUMO2) cross-link. Residues 170–257 form a required for interaction with RB1 region; the sequence is AYGESLEDFN…YPRSQMELKP (88 aa). 2 C2H2-type zinc fingers span residues 258 to 280 and 286 to 308; these read FECTQCGKSFCKKSKFIIHQRAH and YACSVCGKSFSQKGTLTVHRRSH. Residue lysine 312 forms a Glycyl lysine isopeptide (Lys-Gly) (interchain with G-Cter in SUMO2) linkage. 6 consecutive C2H2-type zinc fingers follow at residues 314–336, 342–364, 370–392, 398–420, 426–448, and 454–476; these read YKCNECGKTFCQKLHLTQHQRTH, YECSECGKSFCQKTHLTLHQRNH, YPCNECGKSFSRKSALNDHQRTH, YKCNECGKSYYRKSTLITHQRTH, YQCSECGKFFSRVSYLTIHYRSH, and YECTECGKTFNLNSAFIRHWKVH. A Glycyl lysine isopeptide (Lys-Gly) (interchain with G-Cter in SUMO2) cross-link involves residue lysine 354. An interaction with AR region spans residues 414–711; sequence ITHQRTHTGE…TVNVLTVEKL (298 aa). A C2H2-type 9; degenerate zinc finger spans residues 508-530; the sequence is YECNECGKTFLDSSAFHRHQSVP. A Glycyl lysine isopeptide (Lys-Gly) (interchain with G-Cter in SUMO2) cross-link involves residue lysine 534. 6 consecutive C2H2-type zinc fingers follow at residues 536-558, 564-586, 592-614, 620-642, 648-670, and 676-698; these read YECNICGKSFSDSSCYTVHYRGH, FGCSECGKTFSHNSSLFRHQRVH, YECYECGKFFSQKSYLTIHHRIH, YECSKCGKVFSRMSNLTVHYRSH, YECNECGKVFSQKSYLTVHYRTH, and YECNECGKKFHHRSAFNSHQRIH.

It belongs to the krueppel C2H2-type zinc-finger protein family. As to quaternary structure, interacts with AR. May also interact with other nuclear hormone receptors such as NR3C1/GR. Interacts with RB1.

The protein resides in the nucleus. Functionally, may repress E2F-dependent transcription. May promote AR-dependent transcription. This chain is RB-associated KRAB zinc finger protein (Rbak), found in Mus musculus (Mouse).